A 119-amino-acid polypeptide reads, in one-letter code: Dihydroneopterin aldolase (119 aa).

Substrate-binding positions include Glu-21, Tyr-53, and 72 to 73 (ID). Residue Lys-99 is the Proton donor/acceptor of the active site.

It belongs to the DHNA family.

The catalysed reaction is 7,8-dihydroneopterin = 6-hydroxymethyl-7,8-dihydropterin + glycolaldehyde. It participates in cofactor biosynthesis; tetrahydrofolate biosynthesis; 2-amino-4-hydroxy-6-hydroxymethyl-7,8-dihydropteridine diphosphate from 7,8-dihydroneopterin triphosphate: step 3/4. Functionally, catalyzes the conversion of 7,8-dihydroneopterin to 6-hydroxymethyl-7,8-dihydropterin. The protein is Dihydroneopterin aldolase (folB) of Streptococcus pyogenes.